Consider the following 476-residue polypeptide: Ribulose bisphosphate carboxylase large chain (476 aa).

Positions 1 to 2 (MS) are excised as a propeptide. N-acetylproline is present on Pro3. Lys14 is modified (N6,N6,N6-trimethyllysine). Substrate-binding residues include Asn123 and Thr173. Lys175 acts as the Proton acceptor in catalysis. Lys177 is a substrate binding site. Positions 201, 203, and 204 each coordinate Mg(2+). Lys201 carries the post-translational modification N6-carboxylysine. Substrate-binding residues include Arg295, His327, and Ser379.

Belongs to the RuBisCO large chain family. Type I subfamily. In terms of assembly, heterohexadecamer of 8 large chains and 8 small chains; disulfide-linked. The disulfide link is formed within the large subunit homodimers. Mg(2+) serves as cofactor. Post-translationally, the disulfide bond which can form in the large chain dimeric partners within the hexadecamer appears to be associated with oxidative stress and protein turnover.

The protein localises to the plastid. It is found in the chloroplast. The enzyme catalyses 2 (2R)-3-phosphoglycerate + 2 H(+) = D-ribulose 1,5-bisphosphate + CO2 + H2O. The catalysed reaction is D-ribulose 1,5-bisphosphate + O2 = 2-phosphoglycolate + (2R)-3-phosphoglycerate + 2 H(+). Its function is as follows. RuBisCO catalyzes two reactions: the carboxylation of D-ribulose 1,5-bisphosphate, the primary event in carbon dioxide fixation, as well as the oxidative fragmentation of the pentose substrate in the photorespiration process. Both reactions occur simultaneously and in competition at the same active site. This is Ribulose bisphosphate carboxylase large chain from Barnadesia caryophylla (Xenophontia caryophylla).